A 464-amino-acid polypeptide reads, in one-letter code: uncharacterized protein (464 aa).

2 disordered regions span residues 290 to 374 (YRKQ…ERPK) and 445 to 464 (ETDDEDEENQYSEAEKPLEE). A compositionally biased stretch (low complexity) spans 293-302 (QQQWQQQQQQ). Residues 303-318 (RKVKTPIKKQEAKKKA) are compositionally biased toward basic residues. A compositionally biased stretch (polar residues) spans 352-367 (DMKQQQQMEKGTTSKQ). Residues 445–454 (ETDDEDEENQ) show a composition bias toward acidic residues.

This is an uncharacterized protein from Macaca fascicularis (Crab-eating macaque).